The chain runs to 359 residues: 3-dehydroquinate synthase (359 aa).

Residues 70-75, 105-109, 129-130, lysine 142, lysine 151, and 169-172 contribute to the NAD(+) site; these read DGEQYK, GVIGD, TT, and FYKT. Glutamate 184, histidine 247, and histidine 264 together coordinate Zn(2+).

It belongs to the sugar phosphate cyclases superfamily. Dehydroquinate synthase family. Co(2+) serves as cofactor. It depends on Zn(2+) as a cofactor. Requires NAD(+) as cofactor.

It is found in the cytoplasm. It carries out the reaction 7-phospho-2-dehydro-3-deoxy-D-arabino-heptonate = 3-dehydroquinate + phosphate. Its pathway is metabolic intermediate biosynthesis; chorismate biosynthesis; chorismate from D-erythrose 4-phosphate and phosphoenolpyruvate: step 2/7. Functionally, catalyzes the conversion of 3-deoxy-D-arabino-heptulosonate 7-phosphate (DAHP) to dehydroquinate (DHQ). This Francisella tularensis subsp. mediasiatica (strain FSC147) protein is 3-dehydroquinate synthase.